The following is a 137-amino-acid chain: Putative nickel-responsive regulator (137 aa).

The Ni(2+) site is built by His79, His90, His92, and Cys98.

This sequence belongs to the transcriptional regulatory CopG/NikR family. It depends on Ni(2+) as a cofactor.

Functionally, transcriptional regulator. The polypeptide is Putative nickel-responsive regulator (Campylobacter concisus (strain 13826)).